The chain runs to 99 residues: RING finger protein Z (99 aa).

A lipid anchor (N-myristoyl glycine; by host) is attached at glycine 2. An RING-type; atypical zinc finger spans residues 31-67 (CKSCWFENKGLVECNNHYLCLNCLTLLLSVSNRCPIC). The segment at 74-99 (KLRPSAAPTAPPTGAADSIRPPPYSP) is disordered. The segment covering 77 to 89 (PSAAPTAPPTGAA) has biased composition (low complexity). The PTAP/PSAP motif motif lies at 81–84 (PTAP). Positions 94 to 97 (PPPY) match the PPXY motif motif.

The protein belongs to the arenaviridae Z protein family. As to quaternary structure, interacts with protein NP; this interaction probably directs the encapsidated genome to budding sites. Interacts (via RING domain) with polymerase L; this interaction inhibits viral transcription and replication, Z partially blocks the product exit tunnel for the releasing nascent RNA product. Interacts with the glycoprotein complex; this interaction plays a role in virion budding. Interacts with host eIF4E; this interaction results in eIF4E reduced affinity for its substrate, the 5'-m7 G cap structure. Interacts (via late-budding domain) with host TSG101; this interaction is essential for budding and release of viral particles. Interacts with host RPLP0; this interaction may serve to load ribosome-like particles inside the virion. Interacts with host PML; this interaction induces PML bodies redistribution in the cytoplasm upon viral infection. Interacts with host TAX1BP1. Post-translationally, myristoylation is required for the role of RING finger protein Z in assembly and budding.

It is found in the virion. The protein resides in the host cytoplasm. Its subcellular location is the host perinuclear region. The protein localises to the host cell membrane. Its function is as follows. Plays a crucial role in virion assembly and budding. Expressed late in the virus life cycle, it acts as an inhibitor of viral transcription and RNA synthesis by interacting with the viral polymerase L. Presumably recruits the NP encapsidated genome to cellular membranes at budding sites via direct interaction with NP. Plays critical roles in the final steps of viral release by interacting with host TSG101, a member of the vacuolar protein-sorting pathway and using other cellular host proteins involved in vesicle formation pathway. The budding of the virus progeny occurs after association of protein Z with the viral glycoprotein complex SSP-GP1-GP2 at the cell periphery, step that requires myristoylation of protein Z. Also selectively represses protein production by associating with host eIF4E. In cell-based minigenome assay, has an inhibitory effect on the ribonucleoprotein machinery (vRNP), which is responsible for the replication and transcription of the viral genome. The polypeptide is RING finger protein Z (Homo sapiens (Human)).